A 254-amino-acid polypeptide reads, in one-letter code: 5'-nucleotidase SurE (254 aa).

Asp8, Asp9, Ser38, and Asn91 together coordinate a divalent metal cation.

Belongs to the SurE nucleotidase family. It depends on a divalent metal cation as a cofactor.

The protein localises to the cytoplasm. The catalysed reaction is a ribonucleoside 5'-phosphate + H2O = a ribonucleoside + phosphate. Its function is as follows. Nucleotidase that shows phosphatase activity on nucleoside 5'-monophosphates. The polypeptide is 5'-nucleotidase SurE (Anaeromyxobacter sp. (strain Fw109-5)).